The chain runs to 219 residues: 2-hydroxy-3-keto-5-methylthiopentenyl-1-phosphate phosphatase (219 aa).

Belongs to the HAD-like hydrolase superfamily. MtnX family.

It carries out the reaction 2-hydroxy-5-methylsulfanyl-3-oxopent-1-enyl phosphate + H2O = 1,2-dihydroxy-5-(methylsulfanyl)pent-1-en-3-one + phosphate. It functions in the pathway amino-acid biosynthesis; L-methionine biosynthesis via salvage pathway; L-methionine from S-methyl-5-thio-alpha-D-ribose 1-phosphate: step 4/6. In terms of biological role, dephosphorylates 2-hydroxy-3-keto-5-methylthiopentenyl-1-phosphate (HK-MTPenyl-1-P) yielding 1,2-dihydroxy-3-keto-5-methylthiopentene (DHK-MTPene). The sequence is that of 2-hydroxy-3-keto-5-methylthiopentenyl-1-phosphate phosphatase from Bacillus cereus (strain ATCC 10987 / NRS 248).